A 155-amino-acid polypeptide reads, in one-letter code: Small ribosomal subunit protein uS7c (155 aa).

Belongs to the universal ribosomal protein uS7 family. As to quaternary structure, part of the 30S ribosomal subunit.

The protein resides in the plastid. Its subcellular location is the chloroplast. In terms of biological role, one of the primary rRNA binding proteins, it binds directly to 16S rRNA where it nucleates assembly of the head domain of the 30S subunit. The chain is Small ribosomal subunit protein uS7c (rps7) from Saruma henryi (Upright wild ginger).